We begin with the raw amino-acid sequence, 157 residues long: 6,7-dimethyl-8-ribityllumazine synthase (157 aa).

5-amino-6-(D-ribitylamino)uracil-binding positions include phenylalanine 30, 64–66 (ALE), and 88–90 (CII). 93–94 (ET) serves as a coordination point for (2S)-2-hydroxy-3-oxobutyl phosphate. The active-site Proton donor is the histidine 96. Asparagine 121 contacts 5-amino-6-(D-ribitylamino)uracil. Arginine 135 contacts (2S)-2-hydroxy-3-oxobutyl phosphate.

This sequence belongs to the DMRL synthase family.

The catalysed reaction is (2S)-2-hydroxy-3-oxobutyl phosphate + 5-amino-6-(D-ribitylamino)uracil = 6,7-dimethyl-8-(1-D-ribityl)lumazine + phosphate + 2 H2O + H(+). The protein operates within cofactor biosynthesis; riboflavin biosynthesis; riboflavin from 2-hydroxy-3-oxobutyl phosphate and 5-amino-6-(D-ribitylamino)uracil: step 1/2. Functionally, catalyzes the formation of 6,7-dimethyl-8-ribityllumazine by condensation of 5-amino-6-(D-ribitylamino)uracil with 3,4-dihydroxy-2-butanone 4-phosphate. This is the penultimate step in the biosynthesis of riboflavin. In Albidiferax ferrireducens (strain ATCC BAA-621 / DSM 15236 / T118) (Rhodoferax ferrireducens), this protein is 6,7-dimethyl-8-ribityllumazine synthase.